Consider the following 595-residue polypeptide: Methionine--tRNA ligase (595 aa).

Positions 11 to 21 (PYANGPRHIGH) match the 'HIGH' region motif. Positions 143, 146, 156, and 159 each coordinate Zn(2+). A 'KMSKS' region motif is present at residues 350 to 354 (KFSSS). S353 is an ATP binding site.

This sequence belongs to the class-I aminoacyl-tRNA synthetase family. MetG type 1 subfamily. Monomer. The cofactor is Zn(2+).

The protein resides in the cytoplasm. It catalyses the reaction tRNA(Met) + L-methionine + ATP = L-methionyl-tRNA(Met) + AMP + diphosphate. Functionally, is required not only for elongation of protein synthesis but also for the initiation of all mRNA translation through initiator tRNA(fMet) aminoacylation. The sequence is that of Methionine--tRNA ligase from Nocardioides sp. (strain ATCC BAA-499 / JS614).